The following is a 332-amino-acid chain: Ferredoxin--NADP reductase 1 (332 aa).

7 residues coordinate FAD: Asp-35, Lys-43, Phe-48, Val-88, Phe-123, Asp-284, and Thr-325.

The protein belongs to the ferredoxin--NADP reductase type 2 family. In terms of assembly, homodimer. FAD is required as a cofactor.

It catalyses the reaction 2 reduced [2Fe-2S]-[ferredoxin] + NADP(+) + H(+) = 2 oxidized [2Fe-2S]-[ferredoxin] + NADPH. The sequence is that of Ferredoxin--NADP reductase 1 from Listeria monocytogenes serovar 1/2a (strain ATCC BAA-679 / EGD-e).